The primary structure comprises 499 residues: Glutamyl-tRNA(Gln) amidotransferase subunit A (499 aa).

Active-site charge relay system residues include Lys79 and Ser154. Catalysis depends on Ser178, which acts as the Acyl-ester intermediate.

Belongs to the amidase family. GatA subfamily. In terms of assembly, heterotrimer of A, B and C subunits.

It carries out the reaction L-glutamyl-tRNA(Gln) + L-glutamine + ATP + H2O = L-glutaminyl-tRNA(Gln) + L-glutamate + ADP + phosphate + H(+). Allows the formation of correctly charged Gln-tRNA(Gln) through the transamidation of misacylated Glu-tRNA(Gln) in organisms which lack glutaminyl-tRNA synthetase. The reaction takes place in the presence of glutamine and ATP through an activated gamma-phospho-Glu-tRNA(Gln). The polypeptide is Glutamyl-tRNA(Gln) amidotransferase subunit A (Psychrobacter sp. (strain PRwf-1)).